The chain runs to 131 residues: MAKTRSPSTPPAPERVAAFQTGISAETRAAAFLMAKGYRILARRFKTPYGEIDIVAQRRKLIAFVEVKARARLDDAAYALTPRQQQRIIAAAEAWLVANPDHATYELRFDAMLVAPKRLPQHLPAAFDASP.

Belongs to the UPF0102 family.

The chain is UPF0102 protein RPD_0400 from Rhodopseudomonas palustris (strain BisB5).